The primary structure comprises 60 residues: Large ribosomal subunit protein bL32 (60 aa).

The span at 1–16 (MAVPRNRHSNARKNIR) shows a compositional bias: basic residues. The tract at residues 1-20 (MAVPRNRHSNARKNIRRSHD) is disordered.

Belongs to the bacterial ribosomal protein bL32 family.

The polypeptide is Large ribosomal subunit protein bL32 (rpmF) (Chlamydia pneumoniae (Chlamydophila pneumoniae)).